We begin with the raw amino-acid sequence, 1224 residues long: DNA-directed RNA polymerase subunit beta'' (1224 aa).

Zn(2+) contacts are provided by cysteine 233, cysteine 308, cysteine 315, and cysteine 318.

Belongs to the RNA polymerase beta' chain family. RpoC2 subfamily. As to quaternary structure, in plastids the minimal PEP RNA polymerase catalytic core is composed of four subunits: alpha, beta, beta', and beta''. When a (nuclear-encoded) sigma factor is associated with the core the holoenzyme is formed, which can initiate transcription. The cofactor is Zn(2+).

Its subcellular location is the plastid. It localises to the chloroplast. The catalysed reaction is RNA(n) + a ribonucleoside 5'-triphosphate = RNA(n+1) + diphosphate. In terms of biological role, DNA-dependent RNA polymerase catalyzes the transcription of DNA into RNA using the four ribonucleoside triphosphates as substrates. The protein is DNA-directed RNA polymerase subunit beta'' of Pinus thunbergii (Japanese black pine).